Consider the following 102-residue polypeptide: Nuclear protein 2 (102 aa).

Disordered regions lie at residues 1–26 (MDPPTRPSVSGPRTRARPPPPEALPT) and 46–102 (PASG…TRLA). The segment covering 85–102 (QRKRRQRQLQPRPRTRLA) has biased composition (basic residues).

Belongs to the NUPR family.

It is found in the nucleus. In terms of biological role, acts as a transcriptional repressor by inhibiting gene expression at the NUPR1 promoter in a p53/TP53-dependent manner in cancer cells. Involved in the G1 cell cycle arrest, and in a decrease in cell viability and cell proliferation of pancreatic cancer cells. Plays a role as a negative regulator of the protumoral factor NUPR1. The protein is Nuclear protein 2 of Mus musculus (Mouse).